Reading from the N-terminus, the 184-residue chain is Threonylcarbamoyl-AMP synthase (184 aa).

The YrdC-like domain maps to 1-184 (MNNLENIVEQ…IFTQHIFRQG (184 aa)).

The protein belongs to the SUA5 family. TsaC subfamily.

The protein localises to the cytoplasm. The enzyme catalyses L-threonine + hydrogencarbonate + ATP = L-threonylcarbamoyladenylate + diphosphate + H2O. In terms of biological role, required for the formation of a threonylcarbamoyl group on adenosine at position 37 (t(6)A37) in tRNAs that read codons beginning with adenine. Catalyzes the conversion of L-threonine, HCO(3)(-)/CO(2) and ATP to give threonylcarbamoyl-AMP (TC-AMP) as the acyladenylate intermediate, with the release of diphosphate. This is Threonylcarbamoyl-AMP synthase from Actinobacillus pleuropneumoniae serotype 7 (strain AP76).